A 76-amino-acid polypeptide reads, in one-letter code: Sec-independent protein translocase protein TatA (76 aa).

Residues 1–21 (MGGISITQLLIIVAIVVLLFG) traverse the membrane as a helical segment. Positions 45–76 (DDNKEKDAEFKSLSDDSETTAKTEKAKDKEQA) are disordered.

This sequence belongs to the TatA/E family. The Tat system comprises two distinct complexes: a TatABC complex, containing multiple copies of TatA, TatB and TatC subunits, and a separate TatA complex, containing only TatA subunits. Substrates initially bind to the TatABC complex, which probably triggers association of the separate TatA complex to form the active translocon.

The protein resides in the cell inner membrane. Its function is as follows. Part of the twin-arginine translocation (Tat) system that transports large folded proteins containing a characteristic twin-arginine motif in their signal peptide across membranes. TatA could form the protein-conducting channel of the Tat system. This is Sec-independent protein translocase protein TatA from Pasteurella multocida (strain Pm70).